The chain runs to 511 residues: Pentatricopeptide repeat-containing protein At5g08510 (511 aa).

PPR repeat units follow at residues 46-80 (CTFL…GLRP), 81-115 (SHHT…GFES), 116-146 (DSFC…MSKR), 147-181 (DVPV…NVTS), 182-213 (WTTV…SVKP), 214-248 (NHIT…GFFD), 249-279 (NIYV…LGNQ), 281-315 (NLCS…GEKP), 316-346 (DAVT…MEEV), and 352-382 (KLEH…MPMK). The type E motif stretch occupies residues 387–462 (VWGTLLGACS…AAGYSYFVEV (76 aa)). Residues 463–494 (GVDVHKFTVEDKSHPRSYEIYQVLEEIFRRMK) form a type E(+) motif region.

It belongs to the PPR family. PCMP-E subfamily.

The sequence is that of Pentatricopeptide repeat-containing protein At5g08510 (PCMP-E20) from Arabidopsis thaliana (Mouse-ear cress).